A 248-amino-acid polypeptide reads, in one-letter code: MVKLAFGSFRDSLSAASLKAYVAEFIATLLFVFAGVGSAIAYSQLTKGGALDPAGLVAIAIAHAFALFVGVSMAANISGGHLNPAVTFGLAVGGHITILTGILYWVAQLLGASVACFLLQYVTHGQAIPTHGVSGISEIEGVVMEIVITFALVYTVYATAADPKKGSLGTIAPMAIGFIVGANILAAGPFSGGSMNPARSFGPAVAAGNFAGNWVYWVGPLVGGGLAGLVYGDVFIASYQPVGQQEYP.

2 helical membrane-spanning segments follow: residues 20–40 (AYVA…GSAI) and 54–74 (AGLV…VSMA). Positions 83–85 (NPA) match the NPA 1 motif. A run of 3 helical transmembrane segments spans residues 97–119 (TILT…CFLL), 141–161 (GVVM…ATAA), and 168–188 (LGTI…LAAG). The NPA 2 motif lies at 196-198 (NPA). Residues 217-237 (WVGPLVGGGLAGLVYGDVFIA) form a helical membrane-spanning segment.

This sequence belongs to the MIP/aquaporin (TC 1.A.8) family. TIP (TC 1.A.8.10) subfamily. Specifically expressed in roots.

The protein resides in the cell membrane. Its function is as follows. Water channel required to facilitate the transport of water across cell membrane. In Zea mays (Maize), this protein is Aquaporin TIP2-3 (TIP2-3).